The following is a 207-amino-acid chain: Low-molecular weight cobalt-containing nitrile hydratase subunit alpha (207 aa).

Residues C109, C112, S113, and C114 each contribute to the Co(3+) site.

The protein belongs to the nitrile hydratase subunit alpha family. Heterodimer of an alpha and a beta chain. The cofactor is Co(3+).

The enzyme catalyses an aliphatic primary amide = an aliphatic nitrile + H2O. Functionally, NHase catalyzes the hydration of various nitrile compounds to the corresponding amides. The polypeptide is Low-molecular weight cobalt-containing nitrile hydratase subunit alpha (Rhodococcus rhodochrous).